Here is a 219-residue protein sequence, read N- to C-terminus: ATP-dependent Clp protease proteolytic subunit 1 (219 aa).

The active-site Nucleophile is serine 113. Histidine 138 is an active-site residue.

Belongs to the peptidase S14 family. Fourteen ClpP subunits assemble into 2 heptameric rings which stack back to back to give a disk-like structure with a central cavity, resembling the structure of eukaryotic proteasomes.

It is found in the cytoplasm. It carries out the reaction Hydrolysis of proteins to small peptides in the presence of ATP and magnesium. alpha-casein is the usual test substrate. In the absence of ATP, only oligopeptides shorter than five residues are hydrolyzed (such as succinyl-Leu-Tyr-|-NHMec, and Leu-Tyr-Leu-|-Tyr-Trp, in which cleavage of the -Tyr-|-Leu- and -Tyr-|-Trp bonds also occurs).. Cleaves peptides in various proteins in a process that requires ATP hydrolysis. Has a chymotrypsin-like activity. Plays a major role in the degradation of misfolded proteins. Probably partially responsible for degradation of ECF sigma factor SigR prime. The polypeptide is ATP-dependent Clp protease proteolytic subunit 1 (Streptomyces coelicolor (strain ATCC BAA-471 / A3(2) / M145)).